The sequence spans 1124 residues: uncharacterized protein (1124 aa).

The signal sequence occupies residues 1 to 28 (MALFPRSILIALVLSFVLNLGLVTKIHA). 7 consecutive transmembrane segments (helical) span residues 332 to 352 (IVTA…LLAG), 359 to 379 (EYIN…GINI), 393 to 413 (MIQW…SWVM), 495 to 515 (MLVS…AFMV), 522 to 542 (MISI…FLFA), 555 to 575 (MISF…MFAV), and 700 to 720 (IKNI…MYNF).

The protein belongs to the TrbL/VirB6 family.

The protein localises to the cell membrane. This is an uncharacterized protein from Rickettsia prowazekii (strain Madrid E).